The chain runs to 463 residues: Bifunctional protein HldE (463 aa).

Positions 1 to 313 (MTGPMAVRTD…RALAALPDTD (313 aa)) are ribokinase. The active site involves Asp-258. Residues 331–463 (AAGGCFDLLH…LLARAAEGAR (133 aa)) are cytidylyltransferase.

This sequence in the N-terminal section; belongs to the carbohydrate kinase PfkB family. In the C-terminal section; belongs to the cytidylyltransferase family. In terms of assembly, homodimer.

It catalyses the reaction D-glycero-beta-D-manno-heptose 7-phosphate + ATP = D-glycero-beta-D-manno-heptose 1,7-bisphosphate + ADP + H(+). The enzyme catalyses D-glycero-beta-D-manno-heptose 1-phosphate + ATP + H(+) = ADP-D-glycero-beta-D-manno-heptose + diphosphate. Its pathway is nucleotide-sugar biosynthesis; ADP-L-glycero-beta-D-manno-heptose biosynthesis; ADP-L-glycero-beta-D-manno-heptose from D-glycero-beta-D-manno-heptose 7-phosphate: step 1/4. It functions in the pathway nucleotide-sugar biosynthesis; ADP-L-glycero-beta-D-manno-heptose biosynthesis; ADP-L-glycero-beta-D-manno-heptose from D-glycero-beta-D-manno-heptose 7-phosphate: step 3/4. Catalyzes the phosphorylation of D-glycero-D-manno-heptose 7-phosphate at the C-1 position to selectively form D-glycero-beta-D-manno-heptose-1,7-bisphosphate. In terms of biological role, catalyzes the ADP transfer from ATP to D-glycero-beta-D-manno-heptose 1-phosphate, yielding ADP-D-glycero-beta-D-manno-heptose. The polypeptide is Bifunctional protein HldE (Streptomyces coelicolor (strain ATCC BAA-471 / A3(2) / M145)).